We begin with the raw amino-acid sequence, 466 residues long: Asparagine--tRNA ligase (466 aa).

This sequence belongs to the class-II aminoacyl-tRNA synthetase family. Homodimer.

The protein localises to the cytoplasm. The enzyme catalyses tRNA(Asn) + L-asparagine + ATP = L-asparaginyl-tRNA(Asn) + AMP + diphosphate + H(+). The sequence is that of Asparagine--tRNA ligase from Serratia proteamaculans (strain 568).